We begin with the raw amino-acid sequence, 182 residues long: MLQPPKVLLLYAHPESQDSVANRVLLQPVQQLEHVTVHDLYAHYPDFFIDIHHEQQLLRDHQVIVFQHPLYTYSCPALLKEWLDRVLARGFANGVGGHALTGKHWRSVITTGEQEGTYRIGGYNRYPMEDILRPFELTAAMCHMHWINPMIIYWARRQKPETLASHAQAYVQWLQSPLTRGL.

Belongs to the NAD(P)H dehydrogenase (quinone) family. KefG subfamily. In terms of assembly, interacts with KefB.

It localises to the cell inner membrane. The catalysed reaction is a quinone + NADH + H(+) = a quinol + NAD(+). It carries out the reaction a quinone + NADPH + H(+) = a quinol + NADP(+). Its function is as follows. Regulatory subunit of a potassium efflux system that confers protection against electrophiles. Required for full activity of KefB. The protein is Glutathione-regulated potassium-efflux system ancillary protein KefG of Yersinia pestis bv. Antiqua (strain Nepal516).